Here is a 1319-residue protein sequence, read N- to C-terminus: ERAD-associated E3 ubiquitin-protein ligase DOA10 (1319 aa).

Met-1 carries the N-acetylmethionine modification. Over 1–131 (MDVDSDVNVS…LTFFEKARLA (131 aa)) the chain is Cytoplasmic. The RING-CH-type zinc finger occupies 31 to 100 (DDAPSGATCR…DICHYPIQFK (70 aa)). Residues Cys-39, Cys-42, Cys-56, Cys-58, His-66, Cys-69, Cys-90, and Cys-93 each contribute to the Zn(2+) site. Residues 132–152 (LTIGLAAVLYIIGVPLVWNMF) traverse the membrane as a helical segment. Residues 153–203 (GKLYTMMLDGSSPYPGDFLKSLIYGYDQSATPELTTRAIFYQLLQNHSFTS) are Lumenal-facing. Residues 204-224 (LQFIMIVILHIALYFQYDMIV) form a helical membrane-spanning segment. The Cytoplasmic portion of the chain corresponds to 225–468 (REDVFSKMVF…GPLVINLKLK (244 aa)). Positions 291-306 (ADNNNNVINPRNDNVP) are enriched in low complexity. Disordered stretches follow at residues 291-315 (ADNN…DHRN) and 329-381 (EATE…EADY). A helical membrane pass occupies residues 469-489 (LLNVIAYFIIAVVFTAIYLAI). Residues 490–491 (SY) lie on the Lumenal side of the membrane. Residues 492 to 512 (LFPTFIGFGLLKIYFGIFKVI) form a helical membrane-spanning segment. The Cytoplasmic portion of the chain corresponds to 513–626 (LRGLCHLYYL…LFALKCTFKV (114 aa)). A helical transmembrane segment spans residues 627–647 (FTLFFIELAGFPILAGVMLDF). Residues 648–660 (SLFCPILASNSRM) lie on the Lumenal side of the membrane. The chain crosses the membrane as a helical span at residues 661-681 (LWVPSICAIWPPFSLFVYWTI). The Cytoplasmic segment spans residues 682-739 (GTLYMYWFAKYIGMIRKNIIRPGVLFFIRSPEDPNIKILHDSLIHPMSIQLSRLCLSM). Residues 740–760 (FIYAIFIVLGFGFHTRIFFPF) traverse the membrane as a helical segment. Topologically, residues 761-777 (MLKSNLLSVPEAYKPTS) are lumenal. Residues 778 to 797 (IISWKFNTILLTLYFTKRIL) form a helical membrane-spanning segment. At 798-965 (ESSSYVKPLL…YVPPDFRLRY (168 aa)) the chain is on the cytoplasmic side. Residues 966–986 (MTLLGLVWLFASILMLGVTFI) form a helical membrane-spanning segment. Over 987 to 1019 (SQALINFVCSFGFLPVVKLLLGERNKVYVAWKE) the chain is Lumenal. The helical transmembrane segment at 1020-1040 (LSDISYSYLNIYYVCVGSVCL) threads the bilayer. Over 1041-1113 (SKIAKDILHF…IFDSMLVKYN (73 aa)) the chain is Cytoplasmic. Residues 1114-1134 (LMVFIAIMIAVIRTMVSWVVL) traverse the membrane as a helical segment. Residues 1135–1168 (TDGILACYNYLTIRVFGNSSYTIGNSKWFKYDES) are Lumenal-facing. The helical transmembrane segment at 1169 to 1189 (LLFVVWIISSMVNFGTGYKSL) threads the bilayer. Over 1190 to 1213 (KLFFRNRNTSKLNFLKTMALELFK) the chain is Cytoplasmic. Residues 1214–1234 (QGFLHMVIYVLPIIILSLVFL) form a helical membrane-spanning segment. The Lumenal portion of the chain corresponds to 1235–1270 (RDVSTKQIIDISHGSRSFTLSLNESFPTWTRMQDIY). Residues 1271–1291 (FGLLIALESFTFFFQATVLFI) form a helical membrane-spanning segment. At 1292–1319 (QWFKSTVQNVKDEVYTKGRALENLPDES) the chain is on the cytoplasmic side.

Belongs to the DOA10/MARCH6 family. As to quaternary structure, component of the DOA10 ubiquitin ligase complex which contains E3 ligase SSM4/DOA10 and CDC48-binding protein UBX2/SEL1. The DOA10 complex interacts with the heterotrimeric CDC48-NPL4-UFD1 ATPase complex which is recruited by UBX2/SEL1 via its interaction with CDC48. Interacts with its associated ubiquitin conjugating enzymes UBC6 and UBC7 with its membrane anchor CUE1. Interacts with PEX29.

Its subcellular location is the endoplasmic reticulum membrane. The protein localises to the nucleus inner membrane. The catalysed reaction is S-ubiquitinyl-[E2 ubiquitin-conjugating enzyme]-L-cysteine + [acceptor protein]-L-lysine = [E2 ubiquitin-conjugating enzyme]-L-cysteine + N(6)-ubiquitinyl-[acceptor protein]-L-lysine.. The protein operates within protein modification; protein ubiquitination. E3 ubiquitin-protein ligase which accepts ubiquitin specifically from endoplasmic reticulum-associated UBC6 and UBC7 E2 ligases, and transfers it to substrates promoting their degradation. Mediates the degradation of a broad range of substrates, including endoplasmic reticulum membrane proteins (ERQC), soluble nuclear proteins and soluble cytoplasmic proteins (CytoQC). Component of the DOA10 ubiquitin ligase complex, which is part of the ERAD-C pathway responsible for the rapid degradation of membrane proteins with misfolded cytoplasmic domains. ERAD-C substrates are ubiquitinated through DOA10 in conjunction with the E2 ubiquitin-conjugating enzymes UBC6 and UBC7-CUE1. Ubiquitinated substrates are then removed to the cytosol via the action of the UFD1-NPL4-CDC48/p97 (UNC) AAA ATPase complex and targeted to the proteasome. Also recognizes the N-terminally acetylated residue of proteins as degradation signal (degron). N-terminally acetylated target proteins include MATALPHA2, TBF1, SLK19, YMR090W, HIS3, HSP104, UBP6 and ARO8. Catalyzes ubiquitination of mislocalized tail-anchored proteins that are extracted from the mitochondrion membrane by MSP1: following extraction, mistargeted proteins are transferred to the endoplasmic reticulum, where they are ubiquitinated by DOA10 and degraded by the proteasome. The chain is ERAD-associated E3 ubiquitin-protein ligase DOA10 (SSM4) from Saccharomyces cerevisiae (strain ATCC 204508 / S288c) (Baker's yeast).